We begin with the raw amino-acid sequence, 361 residues long: 3-dehydroquinate synthase (361 aa).

The protein belongs to the archaeal-type DHQ synthase family.

It carries out the reaction 2-amino-2,3,7-trideoxy-D-lyxo-hept-6-ulosonate + NAD(+) + H2O = 3-dehydroquinate + NH4(+) + NADH + H(+). Catalyzes the oxidative deamination and cyclization of 2-amino-3,7-dideoxy-D-threo-hept-6-ulosonic acid (ADH) to yield 3-dehydroquinate (DHQ), which is fed into the canonical shikimic pathway of aromatic amino acid biosynthesis. The polypeptide is 3-dehydroquinate synthase (aroB') (Methanocaldococcus jannaschii (strain ATCC 43067 / DSM 2661 / JAL-1 / JCM 10045 / NBRC 100440) (Methanococcus jannaschii)).